A 492-amino-acid chain; its full sequence is GMP reductase (492 aa).

Residues 30–31 and Arg78 each bind NADP(+); that span reads SR. 2 consecutive CBS domains span residues 99–162 and 164–223; these read LIED…LVET and MTPV…LNAT. Residues 260 to 262 and 313 to 314 contribute to the NADP(+) site; these read DIA and VG. K(+) is bound by residues Gly314, Gly316, and Cys319. The active-site Thioimidate intermediate is Cys319. The Proton donor/acceptor role is filled by Thr321. Arg322 is a binding site for K(+). GMP is bound by residues 352–354, 375–376, and 401–403; these read DGG, GN, and GMA. Residues Met402 and 454–457 contribute to the NADP(+) site; that span reads SGIS. Positions 490–492 match the Microbody targeting signal motif; the sequence is SKL.

It belongs to the IMPDH/GMPR family. GuaC type 1 subfamily. As to quaternary structure, homotetramer.

It localises to the glycosome. It catalyses the reaction IMP + NH4(+) + NADP(+) = GMP + NADPH + 2 H(+). Activated by GTP and inhibited by ATP and IMP. Mycophenolic acid (MPA) is a competitive inhibitor of the enzyme with respect to NADPH. Its function is as follows. Catalyzes the irreversible NADPH-dependent deamination of GMP to IMP. It functions in the conversion of nucleobase, nucleoside and nucleotide derivatives of G to A nucleotides, and in maintaining the intracellular balance of A and G nucleotides. This Leishmania major protein is GMP reductase.